The following is a 384-amino-acid chain: Spermidine/putrescine import ATP-binding protein PotA (384 aa).

Residues 6-238 (ITFNNVSKTF…PINHFVANFI (233 aa)) enclose the ABC transporter domain. Residue 40 to 47 (GASGSGKS) participates in ATP binding.

This sequence belongs to the ABC transporter superfamily. Spermidine/putrescine importer (TC 3.A.1.11.1) family. In terms of assembly, the complex is composed of two ATP-binding proteins (PotA), two transmembrane proteins (PotB and PotC) and a solute-binding protein (PotD).

It is found in the cell membrane. It catalyses the reaction ATP + H2O + polyamine-[polyamine-binding protein]Side 1 = ADP + phosphate + polyamineSide 2 + [polyamine-binding protein]Side 1.. Part of the ABC transporter complex PotABCD involved in spermidine/putrescine import. Responsible for energy coupling to the transport system. This is Spermidine/putrescine import ATP-binding protein PotA from Streptococcus pyogenes serotype M18 (strain MGAS8232).